The sequence spans 228 residues: Large ribosomal subunit protein uL1 (228 aa).

It belongs to the universal ribosomal protein uL1 family. Part of the 50S ribosomal subunit.

Its function is as follows. Binds directly to 23S rRNA. The L1 stalk is quite mobile in the ribosome, and is involved in E site tRNA release. Protein L1 is also a translational repressor protein, it controls the translation of the L11 operon by binding to its mRNA. This chain is Large ribosomal subunit protein uL1, found in Clavibacter sepedonicus (Clavibacter michiganensis subsp. sepedonicus).